A 246-amino-acid chain; its full sequence is Ribonuclease PH (246 aa).

Phosphate contacts are provided by residues Arg91 and Gly129–Arg131.

Belongs to the RNase PH family. As to quaternary structure, homohexameric ring arranged as a trimer of dimers.

It catalyses the reaction tRNA(n+1) + phosphate = tRNA(n) + a ribonucleoside 5'-diphosphate. Functionally, phosphorolytic 3'-5' exoribonuclease that plays an important role in tRNA 3'-end maturation. Removes nucleotide residues following the 3'-CCA terminus of tRNAs; can also add nucleotides to the ends of RNA molecules by using nucleoside diphosphates as substrates, but this may not be physiologically important. Probably plays a role in initiation of 16S rRNA degradation (leading to ribosome degradation) during starvation. This chain is Ribonuclease PH, found in Paraburkholderia xenovorans (strain LB400).